Consider the following 188-residue polypeptide: Accessory gene regulator protein B (188 aa).

4 helical membrane-spanning segments follow: residues 49–69 (VALIFHTFLYTLFTHVSYFLV), 100–122 (VYFQVNLGIMYSVVAIGTVLIIY), 143–163 (LLSIIITMVLLIISFLAPEPF), and 164–184 (KQLILLGITLESITLLPIFFP).

It belongs to the AgrB family.

It localises to the cell membrane. Its function is as follows. Essential for the production of a quorum sensing system signal molecule, the autoinducing peptide (AIP). This quorum sensing system is responsible for the regulation of the expression of virulence factor genes. Involved in the proteolytic processing of AgrD, the precursor of AIP. The protein is Accessory gene regulator protein B of Staphylococcus haemolyticus (strain JCSC1435).